Reading from the N-terminus, the 230-residue chain is Cytochrome c oxidase subunit 2 (230 aa).

The Mitochondrial intermembrane portion of the chain corresponds to 1–14; the sequence is MAHPTQLGFQDAAS. The helical transmembrane segment at 15–45 threads the bilayer; the sequence is PVMEELLHFHDHALMIVFLISALVLYVIITT. Over 46–59 the chain is Mitochondrial matrix; it reads VSTKLTNMYILDSQ. Residues 60–87 traverse the membrane as a helical segment; sequence EIEIVWTVLPALILILIALPSLRILYLM. The Mitochondrial intermembrane portion of the chain corresponds to 88 to 230; sequence DEINDPHLTI…NWSTLMLKDA (143 aa). 6 residues coordinate Cu cation: histidine 161, cysteine 196, glutamate 198, cysteine 200, histidine 204, and methionine 207. Glutamate 198 lines the Mg(2+) pocket.

This sequence belongs to the cytochrome c oxidase subunit 2 family. In terms of assembly, component of the cytochrome c oxidase (complex IV, CIV), a multisubunit enzyme composed of 14 subunits. The complex is composed of a catalytic core of 3 subunits MT-CO1, MT-CO2 and MT-CO3, encoded in the mitochondrial DNA, and 11 supernumerary subunits COX4I, COX5A, COX5B, COX6A, COX6B, COX6C, COX7A, COX7B, COX7C, COX8 and NDUFA4, which are encoded in the nuclear genome. The complex exists as a monomer or a dimer and forms supercomplexes (SCs) in the inner mitochondrial membrane with NADH-ubiquinone oxidoreductase (complex I, CI) and ubiquinol-cytochrome c oxidoreductase (cytochrome b-c1 complex, complex III, CIII), resulting in different assemblies (supercomplex SCI(1)III(2)IV(1) and megacomplex MCI(2)III(2)IV(2)). Found in a complex with TMEM177, COA6, COX18, COX20, SCO1 and SCO2. Interacts with TMEM177 in a COX20-dependent manner. Interacts with COX20. Interacts with COX16. Cu cation is required as a cofactor.

Its subcellular location is the mitochondrion inner membrane. The catalysed reaction is 4 Fe(II)-[cytochrome c] + O2 + 8 H(+)(in) = 4 Fe(III)-[cytochrome c] + 2 H2O + 4 H(+)(out). Its function is as follows. Component of the cytochrome c oxidase, the last enzyme in the mitochondrial electron transport chain which drives oxidative phosphorylation. The respiratory chain contains 3 multisubunit complexes succinate dehydrogenase (complex II, CII), ubiquinol-cytochrome c oxidoreductase (cytochrome b-c1 complex, complex III, CIII) and cytochrome c oxidase (complex IV, CIV), that cooperate to transfer electrons derived from NADH and succinate to molecular oxygen, creating an electrochemical gradient over the inner membrane that drives transmembrane transport and the ATP synthase. Cytochrome c oxidase is the component of the respiratory chain that catalyzes the reduction of oxygen to water. Electrons originating from reduced cytochrome c in the intermembrane space (IMS) are transferred via the dinuclear copper A center (CU(A)) of subunit 2 and heme A of subunit 1 to the active site in subunit 1, a binuclear center (BNC) formed by heme A3 and copper B (CU(B)). The BNC reduces molecular oxygen to 2 water molecules using 4 electrons from cytochrome c in the IMS and 4 protons from the mitochondrial matrix. This Formosania lacustris (Oriental stream loach) protein is Cytochrome c oxidase subunit 2 (mt-co2).